A 218-amino-acid chain; its full sequence is tRNA (guanine-N(7)-)-methyltransferase (218 aa).

The interval 1-25 (MRLKNKPWANELVEEHPESALDRPN) is disordered. The span at 13-25 (VEEHPESALDRPN) shows a compositional bias: basic and acidic residues. Residues E45, E70, D97, and D119 each coordinate S-adenosyl-L-methionine. Residue D119 is part of the active site. K123 contacts substrate. The interaction with RNA stretch occupies residues 125–130 (RHEKRR). Residues D155 and 195–198 (TEYE) contribute to the substrate site.

Belongs to the class I-like SAM-binding methyltransferase superfamily. TrmB family.

It carries out the reaction guanosine(46) in tRNA + S-adenosyl-L-methionine = N(7)-methylguanosine(46) in tRNA + S-adenosyl-L-homocysteine. The protein operates within tRNA modification; N(7)-methylguanine-tRNA biosynthesis. Catalyzes the formation of N(7)-methylguanine at position 46 (m7G46) in tRNA. The polypeptide is tRNA (guanine-N(7)-)-methyltransferase (Lactobacillus delbrueckii subsp. bulgaricus (strain ATCC BAA-365 / Lb-18)).